The sequence spans 125 residues: Fluoride-specific ion channel FluC (125 aa).

The next 2 membrane-spanning stretches (helical) occupy residues 4 to 24 (LWVA…GVWI) and 34 to 54 (YGTF…LTVL). The Na(+) site is built by Gly-74 and Thr-77. Residues 99-119 (VLYFGSSLALGILAVWLGMVV) traverse the membrane as a helical segment.

The protein belongs to the fluoride channel Fluc/FEX (TC 1.A.43) family.

It localises to the cell inner membrane. It carries out the reaction fluoride(in) = fluoride(out). With respect to regulation, na(+) is not transported, but it plays an essential structural role and its presence is essential for fluoride channel function. Its function is as follows. Fluoride-specific ion channel. Important for reducing fluoride concentration in the cell, thus reducing its toxicity. In Acidobacterium capsulatum (strain ATCC 51196 / DSM 11244 / BCRC 80197 / JCM 7670 / NBRC 15755 / NCIMB 13165 / 161), this protein is Fluoride-specific ion channel FluC.